The chain runs to 104 residues: Iron-sulfur cluster assembly protein CyaY (104 aa).

This sequence belongs to the frataxin family.

Involved in iron-sulfur (Fe-S) cluster assembly. May act as a regulator of Fe-S biogenesis. This Rickettsia prowazekii (strain Madrid E) protein is Iron-sulfur cluster assembly protein CyaY.